A 257-amino-acid polypeptide reads, in one-letter code: Imidazole glycerol phosphate synthase subunit HisF (257 aa).

Active-site residues include Asp-11 and Asp-130.

It belongs to the HisA/HisF family. In terms of assembly, heterodimer of HisH and HisF.

It is found in the cytoplasm. It carries out the reaction 5-[(5-phospho-1-deoxy-D-ribulos-1-ylimino)methylamino]-1-(5-phospho-beta-D-ribosyl)imidazole-4-carboxamide + L-glutamine = D-erythro-1-(imidazol-4-yl)glycerol 3-phosphate + 5-amino-1-(5-phospho-beta-D-ribosyl)imidazole-4-carboxamide + L-glutamate + H(+). It participates in amino-acid biosynthesis; L-histidine biosynthesis; L-histidine from 5-phospho-alpha-D-ribose 1-diphosphate: step 5/9. Its function is as follows. IGPS catalyzes the conversion of PRFAR and glutamine to IGP, AICAR and glutamate. The HisF subunit catalyzes the cyclization activity that produces IGP and AICAR from PRFAR using the ammonia provided by the HisH subunit. This is Imidazole glycerol phosphate synthase subunit HisF from Shewanella woodyi (strain ATCC 51908 / MS32).